The following is a 510-amino-acid chain: Amidophosphoribosyltransferase (510 aa).

The active-site Nucleophile is Cys2. A Glutamine amidotransferase type-2 domain is found at 2–239 (CGILGIVLAN…PGEAVIIPKN (238 aa)). The Mg(2+) site is built by Asp373 and Asp374.

In the C-terminal section; belongs to the purine/pyrimidine phosphoribosyltransferase family. Mg(2+) serves as cofactor.

The catalysed reaction is 5-phospho-beta-D-ribosylamine + L-glutamate + diphosphate = 5-phospho-alpha-D-ribose 1-diphosphate + L-glutamine + H2O. It functions in the pathway purine metabolism; IMP biosynthesis via de novo pathway; N(1)-(5-phospho-D-ribosyl)glycinamide from 5-phospho-alpha-D-ribose 1-diphosphate: step 1/2. In Saccharomyces cerevisiae (strain ATCC 204508 / S288c) (Baker's yeast), this protein is Amidophosphoribosyltransferase (ADE4).